The sequence spans 207 residues: MSPLLRRLLLAALLQLAPAQAPVSQPDAPGHQRKVVSWIDVYTRATCQPREVVVPLTVELMGTVAKQLVPSCVTVQRCGGCCPDDGLECVPTGQHQVRMQILMIRYPSSQLGEMSLEEHSQCECRPKKKDSAVKPDRAATPHHRPQPRSVPGWDSAPGAPSPADITHPTPAPGPSAHAAPSTTSALTPGPAAAAADAAASSVAKGGA.

The signal sequence occupies residues Met-1–Ala-21. 3 disulfide bridges follow: Cys-47–Cys-89, Cys-78–Cys-122, and Cys-82–Cys-124. The span at Cys-122–Ala-139 shows a compositional bias: basic and acidic residues. The segment at Cys-122–Ala-207 is disordered. Residues Pro-174–Ala-207 show a composition bias toward low complexity.

The protein belongs to the PDGF/VEGF growth factor family. In terms of assembly, homodimer; disulfide-linked. Can also form heterodimer with VEGF. VEGF-B186 is O-glycosylated. Expressed in all tissues except liver. Highest levels found in heart, skeletal muscle and pancreas.

It localises to the secreted. In terms of biological role, growth factor for endothelial cells. VEGF-B167 binds heparin and neuropilin-1 whereas the binding to neuropilin-1 of VEGF-B186 is regulated by proteolysis. The chain is Vascular endothelial growth factor B (VEGFB) from Homo sapiens (Human).